The chain runs to 793 residues: RNA-binding protein spenito (793 aa).

Disordered stretches follow at residues 1-93 (MSSH…PPAE) and 243-296 (HHDY…KKDK). A compositionally biased stretch (low complexity) spans 25-42 (SRSPGPASRSSLSRNSRS). The segment covering 257–268 (RGGHPHHLHGHA) has biased composition (basic residues). Over residues 285-296 (APYEKPESKKDK) the composition is skewed to basic and acidic residues. 2 consecutive RRM domains span residues 314 to 391 (RTLF…YGKV) and 395 to 469 (TRMW…FAEL). The segment at 507 to 623 (YAPRGGYSPY…RNDALASAST (117 aa)) is disordered. Over residues 526-536 (GGYRGRGRGMY) the composition is skewed to basic residues. Positions 566 to 593 (DEWRRPPGESYDRGARSSSREPGVERSR) are enriched in basic and acidic residues. The SPOC domain occupies 624–791 (VPDVARKCST…HLVIVVVRGG (168 aa)).

The protein belongs to the RRM Spen family. Component of the WMM complex, a N6-methyltransferase complex composed of a catalytic subcomplex, named MAC, and of an associated subcomplex, named MACOM. The MAC subcomplex is composed of Ime4/Mettl3 and Mettl14. The MACOM subcomplex is composed of fl(2)d, Flacc/Xio, Hakai, vir, and, in some cases of nito. Interacts with Sxl. Interacts with Hipk; leading to phosphorylation. In terms of processing, phosphorylated by Hipk at Ser-23, Ser-25 and/or Ser-27; the precise position if phosphorylation sites is unknown. As to expression, widely expressed. Shows some enrichment in the central nervous system.

Its subcellular location is the nucleus. In terms of biological role, RNA-binding protein that acts as an associated component of the WMM complex, a complex that mediates N6-methyladenosine (m6A) methylation of mRNAs. M6a modification plays a role in the efficiency of mRNA splicing and is required for sex determination. In the WMM complex, may act by binding target RNAs and recruiting the WMM complex. Required for sex determination and dosage compensation via Sxl alternative splicing: m6A methylation acts as a key regulator of Sxl pre-mRNA and promotes female-specific alternative splicing of Sxl, which determines female physiognomy. M6A methylation is also required for neuronal functions. Acts as a positive regulator of canonical Wg signaling during wing disk and eye development. The chain is RNA-binding protein spenito from Drosophila melanogaster (Fruit fly).